A 102-amino-acid polypeptide reads, in one-letter code: U7-agatoxin-Ao1a (102 aa).

The first 19 residues, 1–19 (MTQAFFFLLLVSLVASTLS), serve as a signal peptide directing secretion. Positions 20–39 (KEFNFCPRAIDEVCPVKEKR) are excised as a propeptide. Tryptophan 101 carries the post-translational modification Tryptophan amide.

This sequence belongs to the venom protein 11 family. 02 (wap-2) subfamily. In terms of processing, contains 5 disulfide bonds. Expressed by the venom gland.

Its subcellular location is the secreted. In Agelena orientalis (Funnel-web spider), this protein is U7-agatoxin-Ao1a.